The sequence spans 224 residues: Vacuolar protein-sorting-associated protein 24 (224 aa).

A Glycyl lysine isopeptide (Lys-Gly) (interchain with G-Cter in ubiquitin) cross-link involves residue Lys-203.

This sequence belongs to the SNF7 family. As to quaternary structure, core component of the ESCRT-III complex (endosomal sorting required for transport complex III). ESCRT-III appears to be sequentially assembled as a flat lattice on the endosome membrane and forms a transient 450 kDa complex that contains DID4, oligomerized SNF7, VPS20 and VPS24. SNF7 oligomerization into a membrane-associated filament is nucleated by association of SNF7 with VPS20; the process is terminated through association of VPS24, possibly by capping the SNF7 filament. VPS24 subsequently associates with DID4/VPS2. Interacts with the VPS4. Interacts with DID2.

Its subcellular location is the endosome membrane. It is found in the endomembrane system. Class E VPS protein implicated in concentration and sorting of cargo proteins of the multivesicular body (MVB) for incorporation into intralumenal vesicles. The lumenal sequestrated membrane proteins will be targeted into the vacuole after fusion of the endosome with the vacuole. Acts a component of the ESCRT-III complex, which appears to be critical for late steps in MVB sorting, such as membrane invagination and final cargo sorting and recruitment oflate-acting components of the sorting machinery. The MVB pathway requires the sequential function of ESCRT-O, -I,-II and -III complex assemblies. The DID4/VPS2-VPS24 subcomplex is required for the VPS4-dependent dissociation of ESCRT-III. The polypeptide is Vacuolar protein-sorting-associated protein 24 (VPS24) (Saccharomyces cerevisiae (strain ATCC 204508 / S288c) (Baker's yeast)).